The sequence spans 813 residues: Ubiquitin carboxyl-terminal hydrolase 45 (813 aa).

Residues 1-14 (MRVKDPSKDLPEKG) are compositionally biased toward basic and acidic residues. Positions 1-27 (MRVKDPSKDLPEKGKRNKRPLLPHDED) are disordered. Residues 1–62 (MRVKDPSKDL…AVAESLWSVC (62 aa)) are interaction with ERCC1. Ser28 and Ser29 each carry phosphoserine. A UBP-type zinc finger spans residues 36 to 153 (LTCQHVSYAV…AQIVDFLQKH (118 aa)). Cys38, His40, Cys62, Cys65, Cys85, Cys88, Cys93, His101, His105, His114, Cys127, and Cys130 together coordinate Zn(2+). One can recognise a USP domain in the interval 191–812 (KGITNLGNTC…QAYLLFYERI (622 aa)). Residue Cys200 is the Nucleophile of the active site. Basic and acidic residues-rich tracts occupy residues 405–414 (LQETDQDHNK) and 450–466 (WPSEEEKTVVTHPKNDN). Residues 405–552 (LQETDQDHNK…QAKETHGGEE (148 aa)) form a disordered region. Over residues 472–488 (PASTLSTEASLNESLTD) the composition is skewed to polar residues. 2 positions are modified to phosphoserine: Ser507 and Ser525. The span at 521–533 (SRGDSCGHAEQHP) shows a compositional bias: basic and acidic residues. Residue His745 is the Proton acceptor of the active site.

It belongs to the peptidase C19 family. As to quaternary structure, interacts with ERCC1. The catalytically active form interacts with SPDL1. Retina.

It localises to the photoreceptor inner segment. The protein localises to the cytoplasm. Its subcellular location is the nucleus. It carries out the reaction Thiol-dependent hydrolysis of ester, thioester, amide, peptide and isopeptide bonds formed by the C-terminal Gly of ubiquitin (a 76-residue protein attached to proteins as an intracellular targeting signal).. In terms of biological role, catalyzes the deubiquitination of SPDL1. Plays a role in the repair of UV-induced DNA damage via deubiquitination of ERCC1, promoting its recruitment to DNA damage sites. May be involved in the maintenance of photoreceptor function. May play a role in normal retinal development. Plays a role in cell migration. This Mus musculus (Mouse) protein is Ubiquitin carboxyl-terminal hydrolase 45 (Usp45).